Consider the following 255-residue polypeptide: ATP synthase subunit b 1 (255 aa).

The chain crosses the membrane as a helical span at residues 5–22 (WITVAAQIVNFLLLIWLL).

This sequence belongs to the ATPase B chain family. As to quaternary structure, F-type ATPases have 2 components, F(1) - the catalytic core - and F(0) - the membrane proton channel. F(1) has five subunits: alpha(3), beta(3), gamma(1), delta(1), epsilon(1). F(0) has three main subunits: a(1), b(2) and c(10-14). The alpha and beta chains form an alternating ring which encloses part of the gamma chain. F(1) is attached to F(0) by a central stalk formed by the gamma and epsilon chains, while a peripheral stalk is formed by the delta and b chains.

It is found in the cell inner membrane. F(1)F(0) ATP synthase produces ATP from ADP in the presence of a proton or sodium gradient. F-type ATPases consist of two structural domains, F(1) containing the extramembraneous catalytic core and F(0) containing the membrane proton channel, linked together by a central stalk and a peripheral stalk. During catalysis, ATP synthesis in the catalytic domain of F(1) is coupled via a rotary mechanism of the central stalk subunits to proton translocation. Functionally, component of the F(0) channel, it forms part of the peripheral stalk, linking F(1) to F(0). This Dinoroseobacter shibae (strain DSM 16493 / NCIMB 14021 / DFL 12) protein is ATP synthase subunit b 1.